Reading from the N-terminus, the 263-residue chain is Endonuclease 8 (263 aa).

Pro-2 (schiff-base intermediate with DNA) is an active-site residue. Glu-3 functions as the Proton donor in the catalytic mechanism. Lys-53 functions as the Proton donor; for beta-elimination activity in the catalytic mechanism. DNA contacts are provided by Gln-70, Arg-125, and Asn-169. The FPG-type zinc-finger motif lies at 229–263 (KVFHRDGEACERCGGIIEKTTLSSRPFYWCPHCQK). Arg-253 functions as the Proton donor; for delta-elimination activity in the catalytic mechanism.

Belongs to the FPG family. Zn(2+) is required as a cofactor.

The enzyme catalyses 2'-deoxyribonucleotide-(2'-deoxyribose 5'-phosphate)-2'-deoxyribonucleotide-DNA = a 3'-end 2'-deoxyribonucleotide-(2,3-dehydro-2,3-deoxyribose 5'-phosphate)-DNA + a 5'-end 5'-phospho-2'-deoxyribonucleoside-DNA + H(+). In terms of biological role, involved in base excision repair of DNA damaged by oxidation or by mutagenic agents. Acts as a DNA glycosylase that recognizes and removes damaged bases. Has a preference for oxidized pyrimidines, such as thymine glycol, 5,6-dihydrouracil and 5,6-dihydrothymine. Has AP (apurinic/apyrimidinic) lyase activity and introduces nicks in the DNA strand. Cleaves the DNA backbone by beta-delta elimination to generate a single-strand break at the site of the removed base with both 3'- and 5'-phosphates. The protein is Endonuclease 8 of Salmonella dublin (strain CT_02021853).